The sequence spans 244 residues: tRNA pseudouridine synthase A (244 aa).

D52 (nucleophile) is an active-site residue. A substrate-binding site is contributed by Y111.

This sequence belongs to the tRNA pseudouridine synthase TruA family. In terms of assembly, homodimer.

It carries out the reaction uridine(38/39/40) in tRNA = pseudouridine(38/39/40) in tRNA. Formation of pseudouridine at positions 38, 39 and 40 in the anticodon stem and loop of transfer RNAs. The chain is tRNA pseudouridine synthase A from Thermosipho melanesiensis (strain DSM 12029 / CIP 104789 / BI429).